A 2167-amino-acid chain; its full sequence is RNA editing associated helicase 2 (2167 aa).

The N-terminal 30 residues, 1-30 (MRAIRLTVACRYLGPFRSVTLSPVVLPVRL), are a transit peptide targeting the mitochondrion. Disordered regions lie at residues 503–593 (RARG…DEAT) and 937–969 (ENATKPPHTPTPLPLTLGTTQEKPQYPTPPTNV). A compositionally biased stretch (low complexity) spans 532–541 (SSTQTPSSST). One can recognise a DRBM domain in the interval 1024–1095 (DAKTVLQRYC…AMHALALLRR (72 aa)). Positions 1348–1513 (LRAISSNQIV…FGNAPIINVE (166 aa)) constitute a Helicase ATP-binding domain. 1361-1368 (GTTGCGKT) lines the ATP pocket. Residues 1366–1367 (GK) carry the Important for binding to gRNA motif. The DEAH box signature appears at 1460-1463 (DEIH). One can recognise a Helicase C-terminal domain in the interval 1585–1762 (AIDHAVRSLD…SLCLQILALD (178 aa)). The interval 2132-2167 (IIEPCTEPKGGSSEAEKTHVNSSHTPTTSAEAGGDS) is disordered. A compositionally biased stretch (polar residues) spans 2151–2161 (VNSSHTPTTSA).

It belongs to the DEAD box helicase family. DEAH subfamily. As to quaternary structure, component of the REH2-associated complex (REH2C) composed of helicase REH2, associated factors H2F1 and H2F2, and mRNAs at various editing stages; the formation of the complex is RNA-independent. Within the complex, interacts with H2F1; the interaction is direct. Interacts transiently, in a RNA-dependent manner, with various editing complexes including the RNA editing core (RECC) complex, the gRNA-binding (GRBC) complex (also known as the MRB1 complex) and the RNA editing mediator (REMC) complex. Interacts with GAP1/GRBC2 via RNA forming a variant of the GRBC complex known as REH2-GRBC complex. Interacts with mitochondrial ribosomes.

The protein resides in the mitochondrion. It catalyses the reaction ATP + H2O = ADP + phosphate + H(+). ATP-dependent RNA helicase that unwinds RNA in a 3' to 5' direction and that plays an important role in mitochondrial mRNA editing, a process involving the addition and deletion of uridine (U) nucleotides in the pre-mRNA. As part of the RET2-containing gRNA-binding (RET2-GRBC) complex, acts as a scaffold for the assembly of mRNA-gRNA hybrids and the recruitment of the RNA editing core (RECC) complex. Regulates several steps of mRNA editing by the MRBC3010/GRBC6 containing gRNA-binding (MRBC3010-GRBC) complex including loading of unedited mRNA, editing in the first sequence block and subsequent editing progression across multiple sequence blocks. Also, regulates the RNA substrate content of the MRBC3010-GRBC complex as well as the association of this complex with mitoribosomes. This Trypanosoma brucei brucei (strain 927/4 GUTat10.1) protein is RNA editing associated helicase 2.